The primary structure comprises 289 residues: E3 ubiquitin-protein ligase MARCHF1 (289 aa).

A responsible for low stability region spans residues 1 to 66; sequence MLGWCEAIAR…SPTTGTAPRS (66 aa). The segment at 13–69 is disordered; sequence HRIPNNTRTPEISGDLADASQTSTLNEKSPGRSASRSSNISKASSPTTGTAPRSQSR. The span at 43 to 58 shows a compositional bias: low complexity; that stretch reads GRSASRSSNISKASSP. The segment covering 59-69 has biased composition (polar residues); the sequence is TTGTAPRSQSR. The RING-CH-type zinc-finger motif lies at 72 to 133; it reads VCPSTQDICR…ELCKYDFIME (62 aa). 8 residues coordinate Zn(2+): C80, C83, C97, C99, H107, C110, C123, and C126. 2 helical membrane-spanning segments follow: residues 155-175 and 197-217; these read IFCS…SLYV and FWTK…FMYV. Residues 222–279 form a responsible for down-regulation of CD86 and MHC class II cell surface expression region; the sequence is YVQLWRRLKAYNRVIFVQNCPDTAKKLEKNFSCNVNTDIKDAVVVPVPQTGANSLPSA.

In terms of assembly, interacts with CD83; this interaction antagonizes MARCHF1-mediated MHC II and CD86 down-regulation. Post-translationally, ubiquitinated via ubiquitin-conjugating enzyme E2 D1/UBE2D1 independently of lysines, leading to proteolytic degradation. In terms of processing, has a short half-life. Instability/short half-life permits rapid changes that allow efficient induction of antigen presentation once antigen presenting cells, APCs, receive maturation signals. Small changes in protein levels significantly alter the cell surface display of MHC class II proteins. As to expression, expressed in antigen presenting cells, APCs, located in lymph nodes and spleen. Also expressed in lung. Expression is high in follicular B-cells, moderate in dendritic cells and low in splenic T-cells.

It is found in the golgi apparatus. It localises to the trans-Golgi network membrane. The protein localises to the lysosome membrane. Its subcellular location is the cytoplasmic vesicle membrane. The protein resides in the late endosome membrane. It is found in the early endosome membrane. It localises to the cell membrane. The catalysed reaction is S-ubiquitinyl-[E2 ubiquitin-conjugating enzyme]-L-cysteine + [acceptor protein]-L-lysine = [E2 ubiquitin-conjugating enzyme]-L-cysteine + N(6)-ubiquitinyl-[acceptor protein]-L-lysine.. It participates in protein modification; protein ubiquitination. Its function is as follows. E3 ubiquitin-protein ligase that mediates ubiquitination of TFRC, CD86, FAS and MHC class II proteins, such as HLA-DR alpha and beta, and promotes their subsequent endocytosis and sorting to lysosomes via multivesicular bodies. By constitutively ubiquitinating MHC class II proteins in immature dendritic cells, down-regulates their cell surface localization thus sequestering them in the intracellular endosomal system. Also regulates insulin sensitivity by controlling surface expression of the insulin receptor subunit beta/INSR by direct ubiquitination and degradation. (Microbial infection) Plays a role in iron metabolism by regulating the levels of the transferrin receptor TFRC during human cytomegalovirus infection, subsequently contributing to a proviral effect. This is E3 ubiquitin-protein ligase MARCHF1 from Homo sapiens (Human).